Here is a 397-residue protein sequence, read N- to C-terminus: Endoglucanase (397 aa).

E194 functions as the Proton donor in the catalytic mechanism. The active-site Nucleophile is the E317.

Belongs to the glycosyl hydrolase 5 (cellulase A) family.

It carries out the reaction Endohydrolysis of (1-&gt;4)-beta-D-glucosidic linkages in cellulose, lichenin and cereal beta-D-glucans.. In Paenibacillus polymyxa (Bacillus polymyxa), this protein is Endoglucanase.